Consider the following 181-residue polypeptide: Large ribosomal subunit protein uL5c (181 aa).

Belongs to the universal ribosomal protein uL5 family. In terms of assembly, part of the 50S ribosomal subunit; contacts the 5S rRNA.

Its subcellular location is the plastid. In terms of biological role, binds 5S rRNA, forms part of the central protuberance of the 50S subunit. The sequence is that of Large ribosomal subunit protein uL5c (rpl5) from Helicosporidium sp. subsp. Simulium jonesii (Green alga).